Reading from the N-terminus, the 212-residue chain is Thymidylate kinase (212 aa).

10-17 (GLEGAGKT) is a binding site for ATP.

It belongs to the thymidylate kinase family.

The catalysed reaction is dTMP + ATP = dTDP + ADP. Its function is as follows. Phosphorylation of dTMP to form dTDP in both de novo and salvage pathways of dTTP synthesis. The chain is Thymidylate kinase from Yersinia pseudotuberculosis serotype O:3 (strain YPIII).